The sequence spans 102 residues: uncharacterized protein (102 aa).

The helical transmembrane segment at 77–96 threads the bilayer; the sequence is FFSACVAKSYSSFFISICIL.

Its subcellular location is the membrane. This is an uncharacterized protein from Saccharomyces cerevisiae (strain ATCC 204508 / S288c) (Baker's yeast).